The primary structure comprises 225 residues: Venom allergen 5 (225 aa).

Residues 1 to 23 (MKISGFVYLILITTIINLSFSEA) form the signal peptide. 4 disulfide bridges follow: Cys-27–Cys-39, Cys-31–Cys-124, Cys-49–Cys-117, and Cys-191–Cys-208. Positions 69 to 210 (KQHNEFRQKV…WHRHYLVCNY (142 aa)) constitute an SCP domain.

Belongs to the CRISP family. Venom allergen 5-like subfamily. As to expression, expressed by the venom gland.

It is found in the secreted. This Vespa magnifica (Hornet) protein is Venom allergen 5.